We begin with the raw amino-acid sequence, 445 residues long: Cyclic GMP-AMP synthase-like receptor 1 (445 aa).

Mg(2+)-binding residues include E70, D72, and D186. Residue 70–72 coordinates ATP; the sequence is EYD. Residues D186 and 232–239 each bind GTP; that span reads RTSFYEAE. ATP-binding positions include 236–239, K257, and 270–274; these read YEAE and SYHIK. Residues 357 to 445 form a disordered region; sequence LNDDNENSVH…KSKTTTPKPS (89 aa). Basic and acidic residues predominate over residues 377-398; that stretch reads QKMEKTSTESEQKKPTETKPNA. Positions 435–445 are enriched in low complexity; sequence TKSKTTTPKPS.

This sequence belongs to the mab-21 family. The cofactor is Mg(2+). It depends on Mn(2+) as a cofactor.

The catalysed reaction is GTP + ATP = 3',2'-cGAMP + 2 diphosphate. It catalyses the reaction GTP + ATP = pppA(2'-5')pG + diphosphate. It carries out the reaction pppA(2'-5')pG = 3',2'-cGAMP + diphosphate. Its activity is regulated as follows. The enzyme activity is specifically activated by double-stranded RNA (dsRNA). Functionally, nucleotidyltransferase that catalyzes the formation of cyclic GMP-AMP (3',2'-cGAMP) from ATP and GTP and plays a key role in innate immunity. Synthesizes 3',2'-cGAMP in a two-step reaction through production of the linear intermediate pppA(2'-5')pG. Acts as a key sensor of double-stranded RNA (dsRNA), the presence of dsRNA in the cytoplasm being a danger signal that triggers the immune responses. Directly binds dsRNA, activating the nucleotidyltransferase activity, leading to synthesis of 3',2'-cGAMP, a second messenger that binds to and activates Sting, thereby triggering the antiviral immune response via activation of the NF-kappa-B transcription factor Rel (Relish). This is Cyclic GMP-AMP synthase-like receptor 1 from Drosophila erecta (Fruit fly).